The sequence spans 665 residues: Probable potassium transport system protein Kup 2 (665 aa).

13 helical membrane passes run 13–33, 55–75, 98–118, 138–158, 167–187, 195–215, 217–237, 250–270, 295–315, 344–364, 375–395, 400–420, and 428–448; these read GLLV…LYVM, ISLI…LIAL, WLVL…TLTP, IPVP…LFLF, IIGK…GLTG, LSLL…SPAN, VGVL…ALYS, SWPY…VWIL, FFAI…LITG, IFIP…VFLF, GLAI…YLSL, ILLR…FLIS, and GGYV…IWYF.

This sequence belongs to the HAK/KUP transporter (TC 2.A.72) family.

Its subcellular location is the cell membrane. It carries out the reaction K(+)(in) + H(+)(in) = K(+)(out) + H(+)(out). Transport of potassium into the cell. Likely operates as a K(+):H(+) symporter. The protein is Probable potassium transport system protein Kup 2 of Lactobacillus johnsonii (strain CNCM I-12250 / La1 / NCC 533).